Reading from the N-terminus, the 166-residue chain is Phosphopantetheine adenylyltransferase (166 aa).

Position 11 (Ser-11) interacts with substrate. ATP-binding positions include 11–12 (SF) and His-19. Residues Lys-43, Ala-76, and Arg-90 each contribute to the substrate site. ATP is bound by residues 91-93 (GLR), Glu-101, and 126-132 (MQPISSS).

Belongs to the bacterial CoaD family. As to quaternary structure, homohexamer. Mg(2+) is required as a cofactor.

It is found in the cytoplasm. It catalyses the reaction (R)-4'-phosphopantetheine + ATP + H(+) = 3'-dephospho-CoA + diphosphate. It participates in cofactor biosynthesis; coenzyme A biosynthesis; CoA from (R)-pantothenate: step 4/5. Reversibly transfers an adenylyl group from ATP to 4'-phosphopantetheine, yielding dephospho-CoA (dPCoA) and pyrophosphate. The sequence is that of Phosphopantetheine adenylyltransferase from Streptococcus uberis (strain ATCC BAA-854 / 0140J).